The following is a 147-amino-acid chain: Hemoglobin subunit beta (147 aa).

Residues 3-147 enclose the Globin domain; it reads HWSCEEKQFI…VAHALALGYH (145 aa). Heme b contacts are provided by histidine 64 and histidine 93.

This sequence belongs to the globin family. Heterotetramer of two alpha-D chains and two beta chains. In terms of tissue distribution, red blood cells.

In terms of biological role, involved in oxygen transport from the lung to the various peripheral tissues. In Chelonoidis carbonarius (Red-footed tortoise), this protein is Hemoglobin subunit beta (HBB).